A 193-amino-acid chain; its full sequence is Large ribosomal subunit protein uL5 (193 aa).

It belongs to the universal ribosomal protein uL5 family. Part of the 50S ribosomal subunit; part of the 5S rRNA/L5/L18/L25 subcomplex. Contacts the 5S rRNA and the P site tRNA. Forms a bridge to the 30S subunit in the 70S ribosome.

This is one of the proteins that bind and probably mediate the attachment of the 5S RNA into the large ribosomal subunit, where it forms part of the central protuberance. In the 70S ribosome it contacts protein S13 of the 30S subunit (bridge B1b), connecting the 2 subunits; this bridge is implicated in subunit movement. Contacts the P site tRNA; the 5S rRNA and some of its associated proteins might help stabilize positioning of ribosome-bound tRNAs. This Rhizorhabdus wittichii (strain DSM 6014 / CCUG 31198 / JCM 15750 / NBRC 105917 / EY 4224 / RW1) (Sphingomonas wittichii) protein is Large ribosomal subunit protein uL5.